Reading from the N-terminus, the 378-residue chain is Erythronate-4-phosphate dehydrogenase (378 aa).

Ser-45 and Thr-66 together coordinate substrate. 2 residues coordinate NAD(+): Asp-146 and Thr-175. Arg-208 is an active-site residue. Asp-232 contacts NAD(+). Glu-237 is a catalytic residue. The active-site Proton donor is His-254. Residue Gly-257 participates in NAD(+) binding. Tyr-258 provides a ligand contact to substrate.

Belongs to the D-isomer specific 2-hydroxyacid dehydrogenase family. PdxB subfamily. In terms of assembly, homodimer.

The protein localises to the cytoplasm. The catalysed reaction is 4-phospho-D-erythronate + NAD(+) = (R)-3-hydroxy-2-oxo-4-phosphooxybutanoate + NADH + H(+). Its pathway is cofactor biosynthesis; pyridoxine 5'-phosphate biosynthesis; pyridoxine 5'-phosphate from D-erythrose 4-phosphate: step 2/5. Its function is as follows. Catalyzes the oxidation of erythronate-4-phosphate to 3-hydroxy-2-oxo-4-phosphonooxybutanoate. This is Erythronate-4-phosphate dehydrogenase from Escherichia coli (strain 55989 / EAEC).